We begin with the raw amino-acid sequence, 424 residues long: Histidine--tRNA ligase (424 aa).

It belongs to the class-II aminoacyl-tRNA synthetase family. In terms of assembly, homodimer.

It is found in the cytoplasm. The enzyme catalyses tRNA(His) + L-histidine + ATP = L-histidyl-tRNA(His) + AMP + diphosphate + H(+). The chain is Histidine--tRNA ligase from Salmonella agona (strain SL483).